Reading from the N-terminus, the 120-residue chain is UPF0102 protein COXBURSA331_A1934 (120 aa).

The protein belongs to the UPF0102 family.

This Coxiella burnetii (strain RSA 331 / Henzerling II) protein is UPF0102 protein COXBURSA331_A1934.